The following is a 184-amino-acid chain: Protein GrpE (184 aa).

Positions 1–10 are enriched in basic and acidic residues; it reads MSQETEKDLE. Positions 1-38 are disordered; the sequence is MSQETEKDLEQTQNEELVEEAQSDEKKDQEVDPVEAAQ.

The protein belongs to the GrpE family. In terms of assembly, homodimer.

It is found in the cytoplasm. Functionally, participates actively in the response to hyperosmotic and heat shock by preventing the aggregation of stress-denatured proteins, in association with DnaK and GrpE. It is the nucleotide exchange factor for DnaK and may function as a thermosensor. Unfolded proteins bind initially to DnaJ; upon interaction with the DnaJ-bound protein, DnaK hydrolyzes its bound ATP, resulting in the formation of a stable complex. GrpE releases ADP from DnaK; ATP binding to DnaK triggers the release of the substrate protein, thus completing the reaction cycle. Several rounds of ATP-dependent interactions between DnaJ, DnaK and GrpE are required for fully efficient folding. In Sulfurovum sp. (strain NBC37-1), this protein is Protein GrpE.